Consider the following 282-residue polypeptide: 4-hydroxy-tetrahydrodipicolinate reductase (282 aa).

NAD(+) contacts are provided by residues 14-19 and 115-117; these read GAMGRM and GTT. H171 (proton donor/acceptor) is an active-site residue. (S)-2,3,4,5-tetrahydrodipicolinate is bound at residue H172. Residue K175 is the Proton donor of the active site. A (S)-2,3,4,5-tetrahydrodipicolinate-binding site is contributed by 181 to 182; the sequence is GT.

This sequence belongs to the DapB family.

The protein resides in the cytoplasm. The enzyme catalyses (S)-2,3,4,5-tetrahydrodipicolinate + NAD(+) + H2O = (2S,4S)-4-hydroxy-2,3,4,5-tetrahydrodipicolinate + NADH + H(+). It catalyses the reaction (S)-2,3,4,5-tetrahydrodipicolinate + NADP(+) + H2O = (2S,4S)-4-hydroxy-2,3,4,5-tetrahydrodipicolinate + NADPH + H(+). Its pathway is amino-acid biosynthesis; L-lysine biosynthesis via DAP pathway; (S)-tetrahydrodipicolinate from L-aspartate: step 4/4. In terms of biological role, catalyzes the conversion of 4-hydroxy-tetrahydrodipicolinate (HTPA) to tetrahydrodipicolinate. This is 4-hydroxy-tetrahydrodipicolinate reductase from Prochlorococcus marinus (strain NATL2A).